The sequence spans 89 residues: Putative regulatory protein MAE_11840 (89 aa).

It belongs to the RemA family.

The sequence is that of Putative regulatory protein MAE_11840 from Microcystis aeruginosa (strain NIES-843 / IAM M-2473).